Here is a 501-residue protein sequence, read N- to C-terminus: Aldehyde dehydrogenase 1A1 (501 aa).

Residue Ser-2 is modified to N-acetylserine. Lys-91 and Lys-128 each carry N6-acetyllysine. Residues 167-170 (IPWN), 193-196 (KPAE), 226-227 (GP), and 246-247 (GS) each bind NAD(+). Lys-252 is subject to N6-acetyllysine. Glu-269 functions as the Proton acceptor in the catalytic mechanism. 269–271 (ELG) contacts NAD(+). Cys-303 serves as the catalytic Nucleophile. Residues 336–501 (LTPGINQGPQ…VAMKISQKNS (166 aa)) are mediates interaction with PRMT3. At Thr-337 the chain carries Phosphothreonine. Residue 349–353 (EQHDK) participates in NAD(+) binding. Lys-353 and Lys-367 each carry N6-acetyllysine. 400 to 402 (EIF) lines the NAD(+) pocket. Lys-410 carries the N6-acetyllysine modification. Ser-413 carries the post-translational modification Phosphoserine. Residues Lys-419, Lys-435, and Lys-495 each carry the N6-acetyllysine modification.

This sequence belongs to the aldehyde dehydrogenase family. Homotetramer. Interacts with PRMT3; the interaction is direct, inhibits ALDH1A1 aldehyde dehydrogenase activity and is independent of the methyltransferase activity of PRMT3. The N-terminus is blocked most probably by acetylation. In terms of tissue distribution, expressed in retina. Expressed in lens and cornea (at protein level). Expressed by midbrain dopamine neurons.

It localises to the cytoplasm. The protein localises to the cytosol. The protein resides in the cell projection. It is found in the axon. It carries out the reaction an aldehyde + NAD(+) + H2O = a carboxylate + NADH + 2 H(+). The catalysed reaction is all-trans-retinal + NAD(+) + H2O = all-trans-retinoate + NADH + 2 H(+). The enzyme catalyses 9-cis-retinal + NAD(+) + H2O = 9-cis-retinoate + NADH + 2 H(+). It catalyses the reaction 11-cis-retinal + NAD(+) + H2O = 11-cis-retinoate + NADH + 2 H(+). It carries out the reaction 13-cis-retinal + NAD(+) + H2O = 13-cis-retinoate + NADH + 2 H(+). The catalysed reaction is 4-aminobutanal + NAD(+) + H2O = 4-aminobutanoate + NADH + 2 H(+). The enzyme catalyses 3-deoxyglucosone + NAD(+) + H2O = 2-dehydro-3-deoxy-D-gluconate + NADH + 2 H(+). It catalyses the reaction (E)-4-hydroxynon-2-enal + NAD(+) + H2O = (E)-4-hydroxynon-2-enoate + NADH + 2 H(+). It carries out the reaction malonaldehyde + NAD(+) + H2O = 3-oxopropanoate + NADH + 2 H(+). The catalysed reaction is hexanal + NAD(+) + H2O = hexanoate + NADH + 2 H(+). The enzyme catalyses propanal + NAD(+) + H2O = propanoate + NADH + 2 H(+). It catalyses the reaction acetaldehyde + NAD(+) + H2O = acetate + NADH + 2 H(+). It carries out the reaction benzaldehyde + NAD(+) + H2O = benzoate + NADH + 2 H(+). The protein operates within cofactor metabolism; retinol metabolism. Its activity is regulated as follows. The aminobutyraldehyde dehydrogenase activity is negatively regulated by ethanol in vivo. In terms of biological role, cytosolic dehydrogenase that catalyzes the irreversible oxidation of a wide range of aldehydes to their corresponding carboxylic acid. Functions downstream of retinol dehydrogenases and catalyzes the oxidation of retinaldehyde into retinoic acid, the second step in the oxidation of retinol/vitamin A into retinoic acid. This pathway is crucial to control the levels of retinol and retinoic acid, two important molecules which excess can be teratogenic and cytotoxic. Also oxidizes aldehydes resulting from lipid peroxidation like (E)-4-hydroxynon-2-enal/HNE, malonaldehyde and hexanal that form protein adducts and are highly cytotoxic. By participating for instance to the clearance of (E)-4-hydroxynon-2-enal/HNE in the lens epithelium prevents the formation of HNE-protein adducts and lens opacification. Also functions downstream of fructosamine-3-kinase in the fructosamine degradation pathway by catalyzing the oxidation of 3-deoxyglucosone, the carbohydrate product of fructosamine 3-phosphate decomposition, which is itself a potent glycating agent that may react with lysine and arginine side-chains of proteins. Also has an aminobutyraldehyde dehydrogenase activity and is probably part of an alternative pathway for the biosynthesis of GABA/4-aminobutanoate in midbrain, thereby playing a role in GABAergic synaptic transmission. The chain is Aldehyde dehydrogenase 1A1 from Mus musculus (Mouse).